Consider the following 720-residue polypeptide: Long chain acyl-CoA synthetase 8 (720 aa).

The residue at position 1 (Met-1) is an N-acetylmethionine. 279-290 is a binding site for ATP; sequence IMFTSGSTGLPK. Residues 554 to 582 are fatty acid-binding; it reads DEKGTRWFYTGDIGRFHPDGCLEVIDRKK.

The protein belongs to the ATP-dependent AMP-binding enzyme family. Mg(2+) serves as cofactor.

It catalyses the reaction a long-chain fatty acid + ATP + CoA = a long-chain fatty acyl-CoA + AMP + diphosphate. Its pathway is lipid metabolism; fatty acid metabolism. Activation of long-chain fatty acids for both synthesis of cellular lipids, and degradation via beta-oxidation. Preferentially uses palmitate, palmitoleate, oleate and linoleate. The protein is Long chain acyl-CoA synthetase 8 (LACS8) of Arabidopsis thaliana (Mouse-ear cress).